Reading from the N-terminus, the 249-residue chain is 3alpha-hydroxy bile acid-CoA-ester 3-dehydrogenase 2 (249 aa).

NAD(+) is bound by residues 15–18 (TRGI), glutamate 38, glutamate 42, and asparagine 92. Serine 144 lines the substrate pocket. Residues tyrosine 157 and lysine 161 each act as proton donor/acceptor in the active site. NAD(+) is bound by residues lysine 161 and 190–192 (VNT).

It belongs to the short-chain dehydrogenases/reductases (SDR) family. Homotetramer.

The catalysed reaction is a 3alpha-hydroxy bile acid CoA + NAD(+) = a 3-oxo bile acid CoA + NADH + H(+). The enzyme catalyses choloyl-CoA + NAD(+) = 7alpha,12alpha-dihydroxy-3-oxochol-24-oyl-CoA + NADH + H(+). It carries out the reaction chenodeoxycholoyl-CoA + NAD(+) = 7alpha-hydroxy-3-oxochol-24-oyl-CoA + NADH + H(+). It catalyses the reaction deoxycholoyl-CoA + NAD(+) = 12alpha-hydroxy-3-oxocholan-24-oyl-CoA + NADH + H(+). The catalysed reaction is lithocholoyl-CoA + NAD(+) = 3-oxocholan-24-oyl-CoA + NADH + H(+). It functions in the pathway lipid metabolism; bile acid biosynthesis. In terms of biological role, involved in the multi-step bile acid 7alpha-dehydroxylation pathway that transforms primary bile acids to secondary bile acids in the human gut. Catalyzes the oxidation of C3-hydroxyl group of CoA conjugated bile acids generating a C3-oxo bile acid intermediate. Can use choloyl-CoA, chenodeoxycholoyl-CoA, deoxycholoyl-CoA, and lithocholoyl-CoA as substrates with similar efficiency. Highly prefers NAD over NADP as cosubstrate. Also catalyzes the reverse reactions; in vitro, the preferred direction of reaction depends on the pH. Has very little activity with unconjugated (non-CoA) bile acid substrates. This chain is 3alpha-hydroxy bile acid-CoA-ester 3-dehydrogenase 2 (baiA2), found in Clostridium scindens (strain JCM 10418 / VPI 12708).